An 872-amino-acid chain; its full sequence is Translation initiation factor IF-2 (872 aa).

The span at 130-155 (AEEEAARAAEEEAARLAEEEAARRAA) shows a compositional bias: basic and acidic residues. Residues 130-282 (AEEEAARAAE…RERERLKHMQ (153 aa)) form a disordered region. The span at 156-181 (EPQSEPEAAAPAAEPVAPTAPVAAAP) shows a compositional bias: low complexity. Pro residues predominate over residues 182–194 (APAPATPVAPAQP). Over residues 195 to 211 (KPVAAAAPAGDATAVPR) the composition is skewed to low complexity. Over residues 271-282 (RARERERLKHMQ) the composition is skewed to basic and acidic residues. The 169-residue stretch at 371-539 (TRPPVVTVMG…AILLQAEILD (169 aa)) folds into the tr-type G domain. Residues 380–387 (GHVDHGKT) are G1. Position 380 to 387 (380 to 387 (GHVDHGKT)) interacts with GTP. The G2 stretch occupies residues 405 to 409 (GITQH). The segment at 427–430 (DTPG) is G3. Residues 427–431 (DTPGH) and 481–484 (NKID) each bind GTP. Residues 481–484 (NKID) are G4. Residues 517-519 (SAK) are G5.

It belongs to the TRAFAC class translation factor GTPase superfamily. Classic translation factor GTPase family. IF-2 subfamily.

It localises to the cytoplasm. In terms of biological role, one of the essential components for the initiation of protein synthesis. Protects formylmethionyl-tRNA from spontaneous hydrolysis and promotes its binding to the 30S ribosomal subunits. Also involved in the hydrolysis of GTP during the formation of the 70S ribosomal complex. This is Translation initiation factor IF-2 from Paramagnetospirillum magneticum (strain ATCC 700264 / AMB-1) (Magnetospirillum magneticum).